The chain runs to 96 residues: MTKSELIERLVMKYPQLRAQDVEDTVKLMIERICHTLEKGDRVEIRGFGSFSLHYRESRQGRNPKTGESVRVPAKSIPYFRAGKELRERVDEEINQ.

It belongs to the bacterial histone-like protein family. In terms of assembly, heterodimer of an alpha and a beta chain.

Functionally, this protein is one of the two subunits of integration host factor, a specific DNA-binding protein that functions in genetic recombination as well as in transcriptional and translational control. In Dichelobacter nodosus (strain VCS1703A), this protein is Integration host factor subunit beta.